The chain runs to 598 residues: Insulin-like growth factor 2 mRNA-binding protein 1 (598 aa).

2 RRM domains span residues 2 to 75 and 81 to 156; these read NKLY…HSVP and RKLQ…YIPD. A disordered region spans residues 155–195; the sequence is PDENSEVDSQRGPDNGRRPGYGPRGTSRQMSPGSGIPSKHQ. A compositionally biased stretch (basic and acidic residues) spans 162–171; it reads DSQRGPDNGR. The residue at position 185 (serine 185) is a Phosphoserine. 2 consecutive KH domains span residues 198 to 263 and 279 to 346; these read DIPL…CRMI and EVPL…EQEI. Tyrosine 399 is subject to Phosphotyrosine. KH domains follow at residues 407–472 and 489–555; these read QETV…QGRI and KLET…QRKI. A disordered region spans residues 561 to 598; it reads QVKQQQKGGGMGTPQGPHPQGMTELGSPQGLAQEPRRK. Phosphothreonine occurs at positions 573 and 583. A compositionally biased stretch (low complexity) spans 574 to 583; the sequence is PQGPHPQGMT. Residue serine 587 is modified to Phosphoserine.

It belongs to the RRM IMP/VICKZ family. Component of the CRD-mediated complex.

The protein resides in the nucleus. Its subcellular location is the cytoplasm. It localises to the perinuclear region. The protein localises to the P-body. It is found in the stress granule. The protein resides in the cell projection. Its subcellular location is the growth cone. It localises to the filopodium. The protein localises to the lamellipodium. Its function is as follows. RNA-binding factor that recruits target transcripts to cytoplasmic protein-RNA complexes (mRNPs). This transcript 'caging' into mRNPs allows mRNA transport and transient storage. It also modulates the rate and location at which target transcripts encounter the translational apparatus and shields them from endonuclease attacks or microRNA-mediated degradation. Preferentially binds to N6-methyladenosine (m6A)-containing mRNAs and increases their stability. Plays a direct role in the transport and translation of transcripts required for axonal regeneration in adult sensory neurons. Regulates localized beta-actin/ACTB mRNA translation in polarized cells, a crucial process for cell migration and neurite outgrowth. Promotes the directed movement of cells by fine-tuning intracellular signaling networks and enhances the velocity of cell migration. The protein is Insulin-like growth factor 2 mRNA-binding protein 1 (igf2bp1) of Danio rerio (Zebrafish).